Here is a 200-residue protein sequence, read N- to C-terminus: MKPYFCRVFVFCFLIRLLTGEINGSADHRMFSFHNGGVQISCKYPETVQQLKMRLFREREVLCELTKTKGSGNAVSIKNPMLCLYHLSNNSVSFFLNNPDSSQGSYYFCSLSIFDPPPFQERNLSGGYLHIYESQLCCQLKLWLPVGCAAFVVVLLFGCILIIWFSKKKYGSSVHDPNSEYMFMAAVNTNKKSRLAGVTS.

The signal sequence occupies residues 1–20 (MKPYFCRVFVFCFLIRLLTG). Residues 21 to 144 (EINGSADHRM…QLCCQLKLWL (124 aa)) lie on the Extracellular side of the membrane. The N-linked (GlcNAc...) asparagine glycan is linked to N23. Residues 30 to 133 (MFSFHNGGVQ…LSGGYLHIYE (104 aa)) form the Ig-like V-type domain. Disulfide bonds link C42–C109 and C63–C83. Residues N89 and N123 are each glycosylated (N-linked (GlcNAc...) asparagine). The helical transmembrane segment at 145-165 (PVGCAAFVVVLLFGCILIIWF) threads the bilayer. The Cytoplasmic portion of the chain corresponds to 166–200 (SKKKYGSSVHDPNSEYMFMAAVNTNKKSRLAGVTS).

As to quaternary structure, homodimer; disulfide-linked. Interacts with ICOSLG. Interacts with PIK3R1. Interacts with TBK1; this interaction is critical for the maturation of T follicular regulatory cells. Post-translationally, N-glycosylated. In terms of tissue distribution, expressed on activated T-cells and resting memory T-cells. High expression seen in the thymic medulla and in the germinal centers and T-cell zones of lymph nodes and Peyer patches. Expressed at low levels in the spleen.

The protein localises to the cell membrane. Stimulatory receptor expressed in activated or antigen-experienced T-cells that plays an important role in the immune response. Upon binding to its ligand ICOSL expressed on antigen presenting cells (APCs), delivers costimulatory signals that enhances all basic T-cell responses to a foreign antigen, namely proliferation, secretion of lymphokines including IL10, up-regulation of molecules that mediate cell-cell interaction, and effective help for antibody secretion by B-cells. Also acts as a costimulatory receptor critical for the differentiation of T follicular regulatory cells upon immune challenges such as viral infection. Mechanistically, potentiates TCR-induced calcium flux by augmenting PLCG1 activation and actin remodeling. In addition, activates PI3K signaling pathways independently of calcium flux. Essential both for efficient interaction between T and B-cells and for normal antibody responses to T-cell dependent antigens. Prevents the apoptosis of pre-activated T-cells. Plays a critical role in CD40-mediated class switching of immunoglobin isotypes. In Mus musculus (Mouse), this protein is Inducible T-cell costimulator (Icos).